Here is a 305-residue protein sequence, read N- to C-terminus: Dihydroorotate dehydrogenase B (NAD(+)), catalytic subunit (305 aa).

FMN-binding positions include Ser21 and 45 to 46 (KA). Substrate contacts are provided by residues Lys45 and 69 to 73 (NAIGL). Residues Asn99 and Asn127 each contribute to the FMN site. Residue Asn127 coordinates substrate. Catalysis depends on Cys130, which acts as the Nucleophile. Residues Lys165 and Ile190 each contribute to the FMN site. Residue 191 to 192 (NT) coordinates substrate. FMN is bound by residues Gly216, 242–243 (GG), and 264–265 (GT).

Belongs to the dihydroorotate dehydrogenase family. Type 1 subfamily. As to quaternary structure, heterotetramer of 2 PyrK and 2 PyrD type B subunits. FMN serves as cofactor.

It localises to the cytoplasm. It catalyses the reaction (S)-dihydroorotate + NAD(+) = orotate + NADH + H(+). It functions in the pathway pyrimidine metabolism; UMP biosynthesis via de novo pathway; orotate from (S)-dihydroorotate (NAD(+) route): step 1/1. Catalyzes the conversion of dihydroorotate to orotate with NAD(+) as electron acceptor. In Staphylococcus carnosus (strain TM300), this protein is Dihydroorotate dehydrogenase B (NAD(+)), catalytic subunit (pyrD).